The chain runs to 344 residues: Autoinducer 2 import system permease protein LsrC (344 aa).

The next 9 helical transmembrane spans lie at 13–33 (FFAI…YFIL), 38–58 (MIFA…LVML), 69–89 (TVGL…GLAT), 90–110 (AIAF…LLVV), 114–134 (IPAI…MLLW), 155–175 (FIGV…GGWL), 212–232 (LNGM…GFVP), 251–271 (GISL…AFFL), and 283–303 (LPAW…LVLD). Residues 323–344 (QPGNKGSKQVARFPERKSKEVA) are disordered. The span at 335 to 344 (FPERKSKEVA) shows a compositional bias: basic and acidic residues.

The protein belongs to the binding-protein-dependent transport system permease family. AraH/RbsC subfamily. The complex is composed of two ATP-binding proteins (LsrA), two transmembrane proteins (LsrC and LsrD) and a solute-binding protein (LsrB).

Its subcellular location is the cell inner membrane. Part of the ABC transporter complex LsrABCD involved in autoinducer 2 (AI-2) import. Probably responsible for the translocation of the substrate across the membrane. The polypeptide is Autoinducer 2 import system permease protein LsrC (lsrC) (Klebsiella pneumoniae subsp. pneumoniae (strain ATCC 700721 / MGH 78578)).